A 540-amino-acid polypeptide reads, in one-letter code: Chaperonin GroEL 2 (540 aa).

ATP is bound by residues 29 to 32 (TMGP), Lys50, 86 to 90 (DGTTT), Gly414, and Asp496.

This sequence belongs to the chaperonin (HSP60) family. As to quaternary structure, forms a cylinder of 14 subunits composed of two heptameric rings stacked back-to-back. Interacts with the co-chaperonin GroES.

The protein resides in the cytoplasm. The enzyme catalyses ATP + H2O + a folded polypeptide = ADP + phosphate + an unfolded polypeptide.. Functionally, together with its co-chaperonin GroES, plays an essential role in assisting protein folding. The GroEL-GroES system forms a nano-cage that allows encapsulation of the non-native substrate proteins and provides a physical environment optimized to promote and accelerate protein folding. This is Chaperonin GroEL 2 from Rhodopirellula baltica (strain DSM 10527 / NCIMB 13988 / SH1).